We begin with the raw amino-acid sequence, 429 residues long: Citrate synthase, chromosomal (429 aa).

Catalysis depends on residues H306 and D364.

Belongs to the citrate synthase family.

It carries out the reaction oxaloacetate + acetyl-CoA + H2O = citrate + CoA + H(+). Its pathway is carbohydrate metabolism; tricarboxylic acid cycle; isocitrate from oxaloacetate: step 1/2. The protein is Citrate synthase, chromosomal (ccsA) of Rhizobium tropici.